Reading from the N-terminus, the 401-residue chain is Imidazolonepropionase (401 aa).

The Fe(3+) site is built by histidine 66 and histidine 68. Zn(2+)-binding residues include histidine 66 and histidine 68. 4-imidazolone-5-propanoate contacts are provided by arginine 75, tyrosine 138, and histidine 171. An N-formimidoyl-L-glutamate-binding site is contributed by tyrosine 138. Fe(3+) is bound at residue histidine 236. Zn(2+) is bound at residue histidine 236. Glutamine 239 contributes to the 4-imidazolone-5-propanoate binding site. Aspartate 311 provides a ligand contact to Fe(3+). Residue aspartate 311 participates in Zn(2+) binding. 2 residues coordinate N-formimidoyl-L-glutamate: asparagine 313 and glycine 315. Threonine 316 is a 4-imidazolone-5-propanoate binding site.

It belongs to the metallo-dependent hydrolases superfamily. HutI family. Zn(2+) serves as cofactor. Fe(3+) is required as a cofactor.

It localises to the cytoplasm. The enzyme catalyses 4-imidazolone-5-propanoate + H2O = N-formimidoyl-L-glutamate. It functions in the pathway amino-acid degradation; L-histidine degradation into L-glutamate; N-formimidoyl-L-glutamate from L-histidine: step 3/3. Catalyzes the hydrolytic cleavage of the carbon-nitrogen bond in imidazolone-5-propanoate to yield N-formimidoyl-L-glutamate. It is the third step in the universal histidine degradation pathway. The sequence is that of Imidazolonepropionase from Pseudomonas entomophila (strain L48).